The chain runs to 124 residues: Large ribosomal subunit protein bL12 (124 aa).

This sequence belongs to the bacterial ribosomal protein bL12 family. Homodimer. Part of the ribosomal stalk of the 50S ribosomal subunit. Forms a multimeric L10(L12)X complex, where L10 forms an elongated spine to which 2 to 4 L12 dimers bind in a sequential fashion. Binds GTP-bound translation factors.

Functionally, forms part of the ribosomal stalk which helps the ribosome interact with GTP-bound translation factors. Is thus essential for accurate translation. This Bacteroides fragilis (strain ATCC 25285 / DSM 2151 / CCUG 4856 / JCM 11019 / LMG 10263 / NCTC 9343 / Onslow / VPI 2553 / EN-2) protein is Large ribosomal subunit protein bL12.